The primary structure comprises 502 residues: Histidine--tRNA ligase (502 aa).

It belongs to the class-II aminoacyl-tRNA synthetase family. In terms of assembly, homodimer.

The protein resides in the cytoplasm. The enzyme catalyses tRNA(His) + L-histidine + ATP = L-histidyl-tRNA(His) + AMP + diphosphate + H(+). The polypeptide is Histidine--tRNA ligase (Brucella ovis (strain ATCC 25840 / 63/290 / NCTC 10512)).